A 910-amino-acid polypeptide reads, in one-letter code: MFSILKKIFGTANDRTIKKLFSDIAKINSLEPAIQKLSDEELKNKTVEFKKKLKNGATLDDIAYEAFAVVREASRRVYGMRHFDVQLIGGLVLHRGMITEMRTGEGKTLVATLPAYLNALAEKGVYVVTVNDYLVSRDSASMGKIYNFLGLSVGCIVAGMTDEAKREAYNSDITYATNNELGFDYLRDNMKYSLQERVLRPFNFAIIDEVDSILIDEARTPLVISGPVNDNSELYGKVDKLVRMLNVSDFEKDEKLKTINLTESGISHVESLLSQADIIKPNSGLYDFENLSLVHYVNQALRAHNMFMIDVDYLVRDGKVMIIDEFTGRVMEGRRYSEGLHQALEAKENVKIQNENQTLASITFQNYFRNYPKLSGMTGTAMTEAPELKDIYNLDVVAVPTHNKVTRRDLDDEIYGSKKEKYDAILKLIKDCYDRGQPVLVGTVSIEKSEEISNVLNKNKIPHKVLNAKFHEQEAFIIAQAGRFKAVTIATNMAGRGTDIMLGGNPEMLIEQIDRKSLTNAAYKEKVNEIKAQTAEEKKQVIAAGGLFVIGTERHESRRIDNQLRGRSGRQGDPGNTKFFLSLDDDLMRIFASERISGVLRTLGLKDGEAIHHPMISRSLEKAQQKVEGHNYEIRKNLLRFDDVMNDQRKIIYEQRTEIIKSKDSYDFLSSTTEELAKKIVLTFMPAGSYREDWDIENLSVELHRTFAIKLDQNLISKNDVTEEEVTKIVIQTADSIYKSKEEAYSPDLMHNAVKYILLTTLDQVWKDHLHSLDHLRQGISLRAYAQKDPLSEYKREAFNLFEHMLNNLKELFIQTVYHFHIDLKHIQKEDISLENKKLQNNMHESREDPAFSKYNAGSNLETDLRPVISRINPEDRDPKNPTSWGKVSRNELCPCGSGKKYKYCHGLNE.

ATP contacts are provided by residues Gln86, 104–108 (GEGKT), and Asp499. Zn(2+) is bound by residues Cys894, Cys896, Cys905, and His906.

It belongs to the SecA family. As to quaternary structure, monomer and homodimer. Part of the essential Sec protein translocation apparatus which comprises SecA, SecYEG and auxiliary proteins SecDF-YajC and YidC. Requires Zn(2+) as cofactor.

The protein localises to the cell inner membrane. It localises to the cytoplasm. The catalysed reaction is ATP + H2O + cellular proteinSide 1 = ADP + phosphate + cellular proteinSide 2.. Functionally, part of the Sec protein translocase complex. Interacts with the SecYEG preprotein conducting channel. Has a central role in coupling the hydrolysis of ATP to the transfer of proteins into and across the cell membrane, serving both as a receptor for the preprotein-SecB complex and as an ATP-driven molecular motor driving the stepwise translocation of polypeptide chains across the membrane. The protein is Protein translocase subunit SecA of Rickettsia bellii (strain OSU 85-389).